Reading from the N-terminus, the 151-residue chain is Macrodomain Ter protein (151 aa).

Belongs to the MatP family. Homodimer.

It localises to the cytoplasm. Required for spatial organization of the terminus region of the chromosome (Ter macrodomain) during the cell cycle. Prevents early segregation of duplicated Ter macrodomains during cell division. Binds specifically to matS, which is a 13 bp signature motif repeated within the Ter macrodomain. This is Macrodomain Ter protein from Escherichia fergusonii (strain ATCC 35469 / DSM 13698 / CCUG 18766 / IAM 14443 / JCM 21226 / LMG 7866 / NBRC 102419 / NCTC 12128 / CDC 0568-73).